Here is a 325-residue protein sequence, read N- to C-terminus: Pyruvate dehydrogenase E1 component subunit beta (325 aa).

E60 contributes to the thiamine diphosphate binding site.

As to quaternary structure, heterodimer of an alpha and a beta chain. It depends on thiamine diphosphate as a cofactor.

It catalyses the reaction N(6)-[(R)-lipoyl]-L-lysyl-[protein] + pyruvate + H(+) = N(6)-[(R)-S(8)-acetyldihydrolipoyl]-L-lysyl-[protein] + CO2. Its function is as follows. The pyruvate dehydrogenase complex catalyzes the overall conversion of pyruvate to acetyl-CoA and CO(2). It contains multiple copies of three enzymatic components: pyruvate dehydrogenase (E1), dihydrolipoamide acetyltransferase (E2) and lipoamide dehydrogenase (E3). In Staphylococcus epidermidis (strain ATCC 35984 / DSM 28319 / BCRC 17069 / CCUG 31568 / BM 3577 / RP62A), this protein is Pyruvate dehydrogenase E1 component subunit beta (pdhB).